The following is a 351-amino-acid chain: Adenine deaminase (351 aa).

3 residues coordinate Zn(2+): His20, His22, and His200. Residue Glu203 is the Proton donor of the active site. Asp281 contributes to the Zn(2+) binding site. Asp282 contacts substrate.

This sequence belongs to the metallo-dependent hydrolases superfamily. Adenosine and AMP deaminases family. Adenine deaminase type 2 subfamily. Zn(2+) is required as a cofactor.

The enzyme catalyses adenine + H2O + H(+) = hypoxanthine + NH4(+). Its function is as follows. Catalyzes the hydrolytic deamination of adenine to hypoxanthine. Plays an important role in the purine salvage pathway and in nitrogen catabolism. This is Adenine deaminase from Cupriavidus pinatubonensis (strain JMP 134 / LMG 1197) (Cupriavidus necator (strain JMP 134)).